A 365-amino-acid polypeptide reads, in one-letter code: DNA replication and repair protein RecF (365 aa).

Position 23–30 (23–30) interacts with ATP; it reads GPNGIGKS.

It belongs to the RecF family.

The protein resides in the cytoplasm. The RecF protein is involved in DNA metabolism; it is required for DNA replication and normal SOS inducibility. RecF binds preferentially to single-stranded, linear DNA. It also seems to bind ATP. This chain is DNA replication and repair protein RecF, found in Parasynechococcus marenigrum (strain WH8102).